A 93-amino-acid polypeptide reads, in one-letter code: Integration host factor subunit beta (93 aa).

Belongs to the bacterial histone-like protein family. In terms of assembly, heterodimer of an alpha and a beta chain.

In terms of biological role, this protein is one of the two subunits of integration host factor, a specific DNA-binding protein that functions in genetic recombination as well as in transcriptional and translational control. This Haemophilus ducreyi (strain 35000HP / ATCC 700724) protein is Integration host factor subunit beta.